The following is a 250-amino-acid chain: Sulfate transporter CysZ (250 aa).

A run of 4 helical transmembrane segments spans residues 27–47 (FVVL…YYLF), 64–84 (FLSW…LATF), 150–170 (FLLL…WFLF), and 210–230 (MLVA…PVAV).

It belongs to the CysZ family.

It localises to the cell inner membrane. Its function is as follows. High affinity, high specificity proton-dependent sulfate transporter, which mediates sulfate uptake. Provides the sulfur source for the cysteine synthesis pathway. This Vibrio cholerae serotype O1 (strain ATCC 39315 / El Tor Inaba N16961) protein is Sulfate transporter CysZ.